Consider the following 195-residue polypeptide: NADH dehydrogenase [ubiquinone] iron-sulfur protein 3 (195 aa).

The protein belongs to the complex I 30 kDa subunit family. In terms of assembly, complex I is composed of about 45 different subunits. This is a component of the iron-sulfur (IP) fragment of the enzyme.

It is found in the mitochondrion inner membrane. It carries out the reaction a ubiquinone + NADH + 5 H(+)(in) = a ubiquinol + NAD(+) + 4 H(+)(out). Core subunit of the mitochondrial membrane respiratory chain NADH dehydrogenase (Complex I) that is believed to belong to the minimal assembly required for catalysis. Complex I functions in the transfer of electrons from NADH to the respiratory chain. The immediate electron acceptor for the enzyme is believed to be ubiquinone. This is NADH dehydrogenase [ubiquinone] iron-sulfur protein 3 (NAD9) from Marchantia polymorpha (Common liverwort).